A 312-amino-acid polypeptide reads, in one-letter code: DnaJ homolog subfamily B member 7 (312 aa).

The J domain occupies 3 to 69; sequence DYYEVLGVQR…EKRDIYDKYG (67 aa). The disordered stretch occupies residues 272–312; the sequence is SWVTNKKEPSIFSAGFKEGGRRKKKKHKEGQKKKKSNKRNH. A compositionally biased stretch (basic residues) spans 291 to 312; it reads GRRKKKKHKEGQKKKKSNKRNH.

In terms of biological role, probably acts as a co-chaperone. In Mus musculus (Mouse), this protein is DnaJ homolog subfamily B member 7 (Dnajb7).